The primary structure comprises 114 residues: Large ribosomal subunit protein uL22 (114 aa).

It belongs to the universal ribosomal protein uL22 family. Part of the 50S ribosomal subunit.

Functionally, this protein binds specifically to 23S rRNA; its binding is stimulated by other ribosomal proteins, e.g. L4, L17, and L20. It is important during the early stages of 50S assembly. It makes multiple contacts with different domains of the 23S rRNA in the assembled 50S subunit and ribosome. In terms of biological role, the globular domain of the protein is located near the polypeptide exit tunnel on the outside of the subunit, while an extended beta-hairpin is found that lines the wall of the exit tunnel in the center of the 70S ribosome. This is Large ribosomal subunit protein uL22 from Streptococcus pneumoniae (strain Taiwan19F-14).